We begin with the raw amino-acid sequence, 144 residues long: Large ribosomal subunit protein uL16 (144 aa).

This sequence belongs to the universal ribosomal protein uL16 family. Part of the 50S ribosomal subunit.

In terms of biological role, binds 23S rRNA and is also seen to make contacts with the A and possibly P site tRNAs. In Heliobacterium modesticaldum (strain ATCC 51547 / Ice1), this protein is Large ribosomal subunit protein uL16.